A 322-amino-acid chain; its full sequence is Ribosomal RNA large subunit methyltransferase F (322 aa).

Belongs to the methyltransferase superfamily. METTL16/RlmF family.

The protein localises to the cytoplasm. It carries out the reaction adenosine(1618) in 23S rRNA + S-adenosyl-L-methionine = N(6)-methyladenosine(1618) in 23S rRNA + S-adenosyl-L-homocysteine + H(+). Functionally, specifically methylates the adenine in position 1618 of 23S rRNA. The protein is Ribosomal RNA large subunit methyltransferase F of Cytophaga hutchinsonii (strain ATCC 33406 / DSM 1761 / CIP 103989 / NBRC 15051 / NCIMB 9469 / D465).